Consider the following 112-residue polypeptide: Reprimo-like protein (112 aa).

A helical membrane pass occupies residues 59-79 (VVQIAVLCVLSLTVLFGIFFL).

The protein belongs to the reprimo family.

It is found in the membrane. In Xenopus laevis (African clawed frog), this protein is Reprimo-like protein (rprml).